Reading from the N-terminus, the 163-residue chain is Peptidyl-prolyl cis-trans isomerase (163 aa).

Positions 17–163 constitute a PPIase cyclophilin-type domain; it reads KTAYATIKTN…IESVVFSSSL (147 aa).

It belongs to the cyclophilin-type PPIase family.

The enzyme catalyses [protein]-peptidylproline (omega=180) = [protein]-peptidylproline (omega=0). PPIases accelerate the folding of proteins. It catalyzes the cis-trans isomerization of proline imidic peptide bonds in oligopeptides. This is Peptidyl-prolyl cis-trans isomerase (ppiA) from Helicobacter pylori (strain ATCC 700392 / 26695) (Campylobacter pylori).